The following is a 203-amino-acid chain: ATP-dependent Clp protease proteolytic subunit (203 aa).

The active-site Nucleophile is Ser-103. His-128 is an active-site residue.

It belongs to the peptidase S14 family. As to quaternary structure, fourteen ClpP subunits assemble into 2 heptameric rings which stack back to back to give a disk-like structure with a central cavity, resembling the structure of eukaryotic proteasomes.

It localises to the cytoplasm. It carries out the reaction Hydrolysis of proteins to small peptides in the presence of ATP and magnesium. alpha-casein is the usual test substrate. In the absence of ATP, only oligopeptides shorter than five residues are hydrolyzed (such as succinyl-Leu-Tyr-|-NHMec, and Leu-Tyr-Leu-|-Tyr-Trp, in which cleavage of the -Tyr-|-Leu- and -Tyr-|-Trp bonds also occurs).. In terms of biological role, cleaves peptides in various proteins in a process that requires ATP hydrolysis. Has a chymotrypsin-like activity. Plays a major role in the degradation of misfolded proteins. The polypeptide is ATP-dependent Clp protease proteolytic subunit (Dichelobacter nodosus (strain VCS1703A)).